The following is a 257-amino-acid chain: Gasdermin-like protein rcd-1-1 (257 aa).

This sequence belongs to the gasdermin family. In terms of assembly, heterooligomer; the heterooligomer with rcd-1-2 forms a ring-shaped pore complex when inserted in the membrane.

Its subcellular location is the cytoplasm. The protein resides in the cell membrane. Gasdermin-like protein involved in heterokaryon incompatibility, a process that ensures that during spontaneous vegetative cell fusion, only compatible cells from the same colony survive (non-self-recognition). In N.crassa, the rcd-1 locus exists as 2 incompatible alleles, rcd-1-1 (this entry) and rcd-1-2 (AC P0DW10). During the allorecognition process, forms a heterooligomer with rcd-1-2, thereby forming a functional gasdermin-like complex that binds to membranes and forms pores, triggering cell death. Binds negatively charged phospholipids, such as cardiolipin and phosphatidylserine. Also binds to phosphoinositides, preferentially to phosphatidylinositol-3-phosphate (PtdIns-3-P), PtdIns-5-P and PtdIns-3,5-P2. This Neurospora crassa (strain ATCC 24698 / 74-OR23-1A / CBS 708.71 / DSM 1257 / FGSC 987) protein is Gasdermin-like protein rcd-1-1.